Here is a 365-residue protein sequence, read N- to C-terminus: Holliday junction branch migration complex subunit RuvB (365 aa).

A compositionally biased stretch (polar residues) spans 1-10 (MAIVSSNAAS). Positions 1 to 48 (MAIVSSNAASQRPRPDRGPDRVPNRVVDGARQAEDDRDPGRVGAKEDS) are disordered. Composition is skewed to basic and acidic residues over residues 13-23 (PRPDRGPDRVP) and 31-48 (RQAEDDRDPGRVGAKEDS). Residues 13–210 (PRPDRGPDRV…FGLIQRLEFY (198 aa)) form a large ATPase domain (RuvB-L) region. Positions 49, 50, 91, 94, 95, 96, 200, 210, and 247 each coordinate ATP. Threonine 95 contacts Mg(2+). The segment at 211 to 282 (GLEDLQAIVE…LVDEALTLHR (72 aa)) is small ATPAse domain (RuvB-S). Residues 285-365 (GRGLDASDRR…GWPYPQEQAA (81 aa)) form a head domain (RuvB-H) region. Positions 340 and 345 each coordinate DNA.

The protein belongs to the RuvB family. In terms of assembly, homohexamer. Forms an RuvA(8)-RuvB(12)-Holliday junction (HJ) complex. HJ DNA is sandwiched between 2 RuvA tetramers; dsDNA enters through RuvA and exits via RuvB. An RuvB hexamer assembles on each DNA strand where it exits the tetramer. Each RuvB hexamer is contacted by two RuvA subunits (via domain III) on 2 adjacent RuvB subunits; this complex drives branch migration. In the full resolvosome a probable DNA-RuvA(4)-RuvB(12)-RuvC(2) complex forms which resolves the HJ.

The protein localises to the cytoplasm. The enzyme catalyses ATP + H2O = ADP + phosphate + H(+). Its function is as follows. The RuvA-RuvB-RuvC complex processes Holliday junction (HJ) DNA during genetic recombination and DNA repair, while the RuvA-RuvB complex plays an important role in the rescue of blocked DNA replication forks via replication fork reversal (RFR). RuvA specifically binds to HJ cruciform DNA, conferring on it an open structure. The RuvB hexamer acts as an ATP-dependent pump, pulling dsDNA into and through the RuvAB complex. RuvB forms 2 homohexamers on either side of HJ DNA bound by 1 or 2 RuvA tetramers; 4 subunits per hexamer contact DNA at a time. Coordinated motions by a converter formed by DNA-disengaged RuvB subunits stimulates ATP hydrolysis and nucleotide exchange. Immobilization of the converter enables RuvB to convert the ATP-contained energy into a lever motion, pulling 2 nucleotides of DNA out of the RuvA tetramer per ATP hydrolyzed, thus driving DNA branch migration. The RuvB motors rotate together with the DNA substrate, which together with the progressing nucleotide cycle form the mechanistic basis for DNA recombination by continuous HJ branch migration. Branch migration allows RuvC to scan DNA until it finds its consensus sequence, where it cleaves and resolves cruciform DNA. The chain is Holliday junction branch migration complex subunit RuvB from Synechococcus sp. (strain WH7803).